A 606-amino-acid polypeptide reads, in one-letter code: Vitamin B12 transporter BtuB (606 aa).

An N-terminal signal peptide occupies residues 1-22 (MQKSLLAIAMASLLTPVSYLHA). The short motif at 29–36 (DTVVVTAN) is the TonB box element. In terms of domain architecture, TBDR plug spans 41-153 (PLAEVIASTT…IAGVINVITT (113 aa)). The TBDR beta-barrel domain maps to 158-606 (SEGSVVSLGA…RYFANLTYQF (449 aa)). The short motif at 589–606 (LSYNAPERRYFANLTYQF) is the TonB C-terminal box element.

The protein belongs to the TonB-dependent receptor family. BtuB (TC 1.B.14.3.1) subfamily.

The protein resides in the cell outer membrane. Involved in the active translocation of vitamin B12 (cyanocobalamin) across the outer membrane to the periplasmic space. It derives its energy for transport by interacting with the trans-periplasmic membrane protein TonB. The chain is Vitamin B12 transporter BtuB from Vibrio vulnificus (strain CMCP6).